Reading from the N-terminus, the 173-residue chain is Large ribosomal RNA subunit accumulation protein YceD (173 aa).

It belongs to the DUF177 domain family.

Functionally, plays a role in synthesis, processing and/or stability of 23S rRNA. The protein is Large ribosomal RNA subunit accumulation protein YceD (yceD) of Salmonella typhi.